Reading from the N-terminus, the 492-residue chain is Stage IV sporulation protein A (492 aa).

The Walker A motif; involved in ATP-binding signature appears at 24–31 (GAVRTGKS). 24–31 (GAVRTGKS) provides a ligand contact to ATP.

It localises to the cytoplasm. The enzyme catalyses ATP + H2O = ADP + phosphate + H(+). ATPase. Has a role at an early stage in the morphogenesis of the spore coat outer layers. Directs the assembly of the coat and exosporium to an area around the forespore. This chain is Stage IV sporulation protein A, found in Bacillus anthracis.